A 206-amino-acid chain; its full sequence is Large ribosomal subunit protein uL4 (206 aa).

Residues R45–G76 form a disordered region.

The protein belongs to the universal ribosomal protein uL4 family. In terms of assembly, part of the 50S ribosomal subunit.

Its function is as follows. One of the primary rRNA binding proteins, this protein initially binds near the 5'-end of the 23S rRNA. It is important during the early stages of 50S assembly. It makes multiple contacts with different domains of the 23S rRNA in the assembled 50S subunit and ribosome. Functionally, forms part of the polypeptide exit tunnel. The sequence is that of Large ribosomal subunit protein uL4 from Clostridium novyi (strain NT).